The following is a 132-amino-acid chain: Small ribosomal subunit protein uS8 (132 aa).

It belongs to the universal ribosomal protein uS8 family. In terms of assembly, part of the 30S ribosomal subunit. Contacts proteins S5 and S12.

One of the primary rRNA binding proteins, it binds directly to 16S rRNA central domain where it helps coordinate assembly of the platform of the 30S subunit. This chain is Small ribosomal subunit protein uS8, found in Rickettsia massiliae (strain Mtu5).